We begin with the raw amino-acid sequence, 618 residues long: 2-succinyl-5-enolpyruvyl-6-hydroxy-3-cyclohexene-1-carboxylate synthase (618 aa).

Positions 192-215 are disordered; the sequence is DPVAERGRDGPYVDVTPGSPEPGD.

It belongs to the TPP enzyme family. MenD subfamily. In terms of assembly, homodimer. It depends on Mg(2+) as a cofactor. The cofactor is Mn(2+). Requires thiamine diphosphate as cofactor.

It carries out the reaction isochorismate + 2-oxoglutarate + H(+) = 5-enolpyruvoyl-6-hydroxy-2-succinyl-cyclohex-3-ene-1-carboxylate + CO2. Its pathway is quinol/quinone metabolism; 1,4-dihydroxy-2-naphthoate biosynthesis; 1,4-dihydroxy-2-naphthoate from chorismate: step 2/7. It participates in quinol/quinone metabolism; menaquinone biosynthesis. Its function is as follows. Catalyzes the thiamine diphosphate-dependent decarboxylation of 2-oxoglutarate and the subsequent addition of the resulting succinic semialdehyde-thiamine pyrophosphate anion to isochorismate to yield 2-succinyl-5-enolpyruvyl-6-hydroxy-3-cyclohexene-1-carboxylate (SEPHCHC). The protein is 2-succinyl-5-enolpyruvyl-6-hydroxy-3-cyclohexene-1-carboxylate synthase of Halorubrum lacusprofundi (strain ATCC 49239 / DSM 5036 / JCM 8891 / ACAM 34).